A 307-amino-acid polypeptide reads, in one-letter code: Taste receptor type 2 member 41 (307 aa).

The Extracellular segment spans residues 1-7; the sequence is MQAALTA. The helical transmembrane segment at 8–28 threads the bilayer; sequence FFMLLFSLLSLLGIAANGFIV. The Cytoplasmic segment spans residues 29–40; it reads LVLGREWLRYGR. A helical membrane pass occupies residues 41–61; the sequence is LLPLDMILISLGASRFCLQLV. Residues 62 to 88 lie on the Extracellular side of the membrane; it reads GTVHNFYYSAQKVEYSGGLGRQFFHLH. A helical transmembrane segment spans residues 89–109; it reads WHFLNSATFWFCSWLSVLFCV. Residues 110–129 are Cytoplasmic-facing; the sequence is KIANITHPTFLWLKWRFPGW. A helical membrane pass occupies residues 130-150; the sequence is VPWLLLGSVLISFIITLLFFW. Over 151-183 the chain is Extracellular; that stretch reads VNYPAYQEFLIRKFSVNMTYKWNTRIETYYFPS. The N-linked (GlcNAc...) asparagine glycan is linked to asparagine 167. A helical transmembrane segment spans residues 184-204; sequence LKLVIWSIPFSVFLVSIMLLI. Residues 205-234 lie on the Cytoplasmic side of the membrane; sequence NSLRRHTQRMQHNGHSLQDPSTQAHTRALK. The helical transmembrane segment at 235-255 threads the bilayer; the sequence is SLISFLILYALSFLSLIIDAT. The Extracellular segment spans residues 256-264; it reads KFISMQNDF. A helical membrane pass occupies residues 265–285; the sequence is YWPWQIAVYLCISVHPFILIF. Over 286–307 the chain is Cytoplasmic; the sequence is SNLKLRSVFSQLLLLARGFWVA.

Belongs to the G-protein coupled receptor T2R family.

The protein resides in the membrane. Receptor that may play a role in the perception of bitterness and is gustducin-linked. May play a role in sensing the chemical composition of the gastrointestinal content. The activity of this receptor may stimulate alpha gustducin, mediate PLC-beta-2 activation and lead to the gating of TRPM5. The chain is Taste receptor type 2 member 41 (TAS2R41) from Pan troglodytes (Chimpanzee).